The following is a 602-amino-acid chain: Elongation factor 4 (602 aa).

The region spanning 7–190 (KHIRNFCIVA…AVVQKVPAPS (184 aa)) is the tr-type G domain. GTP-binding positions include 19 to 24 (DHGKST) and 137 to 140 (NKID).

This sequence belongs to the TRAFAC class translation factor GTPase superfamily. Classic translation factor GTPase family. LepA subfamily.

The protein resides in the cell membrane. The enzyme catalyses GTP + H2O = GDP + phosphate + H(+). Functionally, required for accurate and efficient protein synthesis under certain stress conditions. May act as a fidelity factor of the translation reaction, by catalyzing a one-codon backward translocation of tRNAs on improperly translocated ribosomes. Back-translocation proceeds from a post-translocation (POST) complex to a pre-translocation (PRE) complex, thus giving elongation factor G a second chance to translocate the tRNAs correctly. Binds to ribosomes in a GTP-dependent manner. In Clostridium acetobutylicum (strain ATCC 824 / DSM 792 / JCM 1419 / IAM 19013 / LMG 5710 / NBRC 13948 / NRRL B-527 / VKM B-1787 / 2291 / W), this protein is Elongation factor 4.